The chain runs to 408 residues: Acetate kinase (408 aa).

Mg(2+) is bound at residue Asn-10. Position 17 (Lys-17) interacts with ATP. Arg-96 is a substrate binding site. The active-site Proton donor/acceptor is Asp-153. ATP-binding positions include His-213–Gly-217 and Asp-288–Arg-290. A Mg(2+)-binding site is contributed by Glu-393.

The protein belongs to the acetokinase family. In terms of assembly, homodimer. Requires Mg(2+) as cofactor. It depends on Mn(2+) as a cofactor.

It localises to the cytoplasm. The catalysed reaction is acetate + ATP = acetyl phosphate + ADP. It functions in the pathway metabolic intermediate biosynthesis; acetyl-CoA biosynthesis; acetyl-CoA from acetate: step 1/2. Catalyzes the formation of acetyl phosphate from acetate and ATP. Can also catalyze the reverse reaction. The chain is Acetate kinase from Borrelia recurrentis (strain A1).